We begin with the raw amino-acid sequence, 144 residues long: Maximins 11/H11 (144 aa).

A signal peptide spans 1–18; that stretch reads MNFKYIVAVSFLIASAYA. The propeptide occupies 19–43; that stretch reads RSEENDEQSLSQRDVLEEESLREIR. At Asn-70 the chain carries Asparagine amide. Residues 74–123 constitute a propeptide that is removed on maturation; that stretch reads TAEDHEVMKRLEAVMRDLDSLDYPEEASERETRGFNQEEIANLFTKKEKR. Ile-143 is subject to Isoleucine amide.

This sequence belongs to the bombinin family. In terms of tissue distribution, expressed by the skin glands.

It localises to the secreted. Functionally, maximin-11 shows antimicrobial activity against bacteria and against the fungus C.albicans. It has little hemolytic activity. In terms of biological role, maximin-H11 shows antimicrobial activity against bacteria and against the fungus C.albicans. Shows strong hemolytic activity. The sequence is that of Maximins 11/H11 from Bombina maxima (Giant fire-bellied toad).